Consider the following 121-residue polypeptide: Inner membrane protein YhaH (121 aa).

At 1 to 23 (MDWYLKVLKNYVGFRGRARRKEY) the chain is on the periplasmic side. Residues 24-44 (WMFILVNIIFTFVLGLLDKML) form a helical membrane-spanning segment. The Cytoplasmic portion of the chain corresponds to 45–49 (GWQRA). A helical membrane pass occupies residues 50–70 (GGEGILTTIYGILVFLPWWAV). At 71–80 (QFRRLHDTDR) the chain is on the periplasmic side. The chain crosses the membrane as a helical span at residues 81–101 (SAWWALLFLIPFIGWLIIIVF). Residues 102-121 (NCQAGTPGENRFGPDPKLEP) lie on the Cytoplasmic side of the membrane.

The protein to E.coli YhaI.

The protein localises to the cell inner membrane. The sequence is that of Inner membrane protein YhaH (yhaH) from Escherichia coli O157:H7.